The following is a 564-amino-acid chain: Proline--tRNA ligase (564 aa).

Belongs to the class-II aminoacyl-tRNA synthetase family. ProS type 1 subfamily. Homodimer.

Its subcellular location is the cytoplasm. The enzyme catalyses tRNA(Pro) + L-proline + ATP = L-prolyl-tRNA(Pro) + AMP + diphosphate. In terms of biological role, catalyzes the attachment of proline to tRNA(Pro) in a two-step reaction: proline is first activated by ATP to form Pro-AMP and then transferred to the acceptor end of tRNA(Pro). As ProRS can inadvertently accommodate and process non-cognate amino acids such as alanine and cysteine, to avoid such errors it has two additional distinct editing activities against alanine. One activity is designated as 'pretransfer' editing and involves the tRNA(Pro)-independent hydrolysis of activated Ala-AMP. The other activity is designated 'posttransfer' editing and involves deacylation of mischarged Ala-tRNA(Pro). The misacylated Cys-tRNA(Pro) is not edited by ProRS. The chain is Proline--tRNA ligase from Xylella fastidiosa (strain M12).